Here is a 101-residue protein sequence, read N- to C-terminus: Small ribosomal subunit protein uS14A (101 aa).

The disordered stretch occupies residues 35–56; that stretch reads TSSYEQRLDAQRALSRQPRDAS.

The protein belongs to the universal ribosomal protein uS14 family. Part of the 30S ribosomal subunit. Contacts proteins S3 and S10.

Its function is as follows. Binds 16S rRNA, required for the assembly of 30S particles and may also be responsible for determining the conformation of the 16S rRNA at the A site. This is Small ribosomal subunit protein uS14A from Mycobacterium marinum (strain ATCC BAA-535 / M).